Reading from the N-terminus, the 431-residue chain is Keratin, type I cytoskeletal 18 (431 aa).

The interval 2–83 is head; sequence SLRTSYSVRS…SGSTGEIMGN (82 aa). The residue at position 12 (serine 12) is a Phosphoserine. A Phosphothreonine modification is found at threonine 13. 2 positions are modified to phosphoserine: serine 22 and serine 36. A coil 1A region spans residues 84-119; it reads EKMAMQNLNDRLASYLEKVRILEQANSKLELKIREA. An IF rod domain is found at 84–395; that stretch reads EKMAMQNLND…RLLDGGDFKL (312 aa). Residues 120–136 are linker 1; sequence LEKRGPDVHDYSRFQPI. Positions 137–228 are coil 1B; the sequence is VDELRKKIFD…KNHDNEVMEL (92 aa). The interval 229–252 is linker 12; it reads RNQISQSGVQVDVDAPKGQDLSQI. Residues 253-390 form a coil 2 region; the sequence is MEEIRAKYEK…IATYRRLLDG (138 aa). A tail region spans residues 391 to 431; sequence GDFKLQDALEEQKKVKVMTVTQTLVDGKVVSSSTETKERKL.

Belongs to the intermediate filament family. As to quaternary structure, heterotetramer of two type I and two type II keratins. Keratin-18 associates with keratin-8. Post-translationally, proteolytically cleaved by caspases during epithelial cell apoptosis. As to expression, expressed in simple epithelia such as intestinal mucosa, bile duct, hepatocytes, renal tubules, endothelia, ocular lens epithelium, and in a variety of mesenchymally-derived cells such as blood vessel endothelia, pillar gill cells, optic nerve glial cells, fibroblasts, interstitial cells, chondrocytes and ovarian theca cells. Also expressed in epidermis, pharyngeal mucosa, mucosa of anterior esophagus, gill mucosa and cornea.

Functionally, when phosphorylated, plays a role in filament reorganization. The chain is Keratin, type I cytoskeletal 18 from Danio rerio (Zebrafish).